Reading from the N-terminus, the 982-residue chain is MRRFEFALARMSGAAFCVYTGYRLLTSKWLADRVEDYRQRIIAEKKQILRDAAMIRTQIQREMELVRISVRKGHSHQEAATERNSATETMLGVVEKCGYEPYVISPSPREVGYHGSRQFYSLADFRQDYRRDDITDRHIIVMTDVDYYVDMHELIGLGVPILLYTFQPSTVSGEVKDGYFTITDDSVHYRVAGGKDVRHRIWNYNHDTMYVCSRPRGFWANLMQILRDITGVTAICSFLYTKLGIAPFGDPVTMFTVDQFKMGEHRNIVSIVPFATCRSNLLKISEYGAELEYMRYQQRNNIANFNAVTYISENGPLISLGLEGNFASVQLPLQDFENIRTAYELSKTNNLSDTVRRSGRPCKEAAIIHKCLQAECAVVSEVVHKPGDLARHYQAVGSAYDTDPAEQGKCYAREYAPGPLTQTAVFPSESRSNELATIDGRIAGPQAKAKSREHITPKMRKVARDFVHHLVPIAGTGRPYPLTYVEEQQTKPLQRARNDANRYHDEFTMMVKAFQKKEAYNAPNYPRNISTVPHTQNVKLSSYTYAFKASVLQHVPWYMPTHTPAEIADAVQNLAASSTELVETDYSKFDGTFLRFMRECVEFAIYKRWVHLDHLPELTTLLANEIQAPAVTRLGIKYDPDCSRLSGSALTTDGNSIANAFVSYLAGRMAGMDDDEAWSWIGIVYGDDGLRSGNVSNELLTNTASSLGFDLKIVNRAPRGSPVTFLSRVYLDPWSSPASVQSPLRTLLKLHTTCDTQSEIDDIGWAKTQAYLVTDSKTPFIGHWCRAYQRNCTARVVQYADYADIPFWVKNDDHVGNSWPQSESDDWNDIVANELGVTTAELLKHLALLDAYAGPISGLPRLTTSIDLEPKMSVALDGEIQAGPSQNKTSKDGTNPTSDRSAPRRARAALPGDDGHARRSRRSDRDPGKRDAHVRDKRPRRSSPPTRPVTPVPTPSSGDRGTDGDGLGRAAVRQRQRRRTQV.

The RdRp catalytic domain maps to 579–701 (TELVETDYSK…SGNVSNELLT (123 aa)). Positions 879–982 (EIQAGPSQNK…RQRQRRRTQV (104 aa)) are disordered. Residues 883 to 899 (GPSQNKTSKDGTNPTSD) are compositionally biased toward polar residues. Positions 913–934 (DDGHARRSRRSDRDPGKRDAHV) are enriched in basic and acidic residues. A compositionally biased stretch (pro residues) spans 945–954 (PTRPVTPVPT). Over residues 972 to 982 (VRQRQRRRTQV) the composition is skewed to basic residues.

This sequence belongs to the nodaviridae RNA polymerase family.

The catalysed reaction is RNA(n) + a ribonucleoside 5'-triphosphate = RNA(n+1) + diphosphate. Its function is as follows. RNA-dependent RNA polymerase which replicates the viral genome composed of 2 RNA segments, RNA1 and RNA2. The protein is RNA-directed RNA polymerase of Epinephelus tauvina (Greasy grouper).